The primary structure comprises 193 residues: Peptidyl-tRNA hydrolase (193 aa).

Tyr21 lines the tRNA pocket. His26 acts as the Proton acceptor in catalysis. Residues Tyr72, Asn74, and Asn120 each coordinate tRNA.

Belongs to the PTH family. As to quaternary structure, monomer.

The protein resides in the cytoplasm. It carries out the reaction an N-acyl-L-alpha-aminoacyl-tRNA + H2O = an N-acyl-L-amino acid + a tRNA + H(+). In terms of biological role, hydrolyzes ribosome-free peptidyl-tRNAs (with 1 or more amino acids incorporated), which drop off the ribosome during protein synthesis, or as a result of ribosome stalling. Functionally, catalyzes the release of premature peptidyl moieties from peptidyl-tRNA molecules trapped in stalled 50S ribosomal subunits, and thus maintains levels of free tRNAs and 50S ribosomes. The polypeptide is Peptidyl-tRNA hydrolase (Nocardia farcinica (strain IFM 10152)).